A 5100-amino-acid polypeptide reads, in one-letter code: MTPGAQLLPLLVAISTAVAAVVTSDAPTKTLSPATGDATLAFVFDVTGSMWDDLMQVIDGASRILERSLSSRSRVIANYALVPFHDPDIGPVTLTADPVVFQRELRELYVQGGGDCPEMSVGAIKAAVEVANPGSFIYVFSDARAKDYHKKKELLQLLQLKQSQVVFVLTGDCGDRTHPGYLVFEEIASTSSGQVFQLDKQQVSEVLKWVESAIQASKVHLLSADHEEEGEHTWRIPFDPSLKEVTIALSGPGPEIEVRDPLGRVLQTDEGLNVLLNIPDSAKVVAFKPEHPGLWAIKVYSSGRHSVRISGISNINFRAGFSMQPSLDLNHTIEWPLQGVPISLVINSTGLQAPGHLESVELSHSSGRSLLTLPTQLLSNGSTHQLWAGPPFHVPKERFYLKVKGKDHEGNPLLRVSGVSYSAVAPGVPLVSMAPKIHGYLQQPLLVSCSVYSTLPFQLQLQRDGERLGEERYFQESGNSSWEIPRASKAEEGTYQCIAVSRAGSGRASAQIVITDPPPQLVPGPNVTVSPGETAILSCQVLGETPYNLTWVRDWRALPATTGRISQLSDLSLEVRSIIPTDGGQYQCVASNPNGVTRATTWLLVREAPQVSINARSQRFSQGVEVRVSCSASGYPTPHISWSREGLALPEDSRIHVDAQGTLIIQGLAPEDAGNYSCQATNEVGTDEETVTLYYTDPPSVSAVNAVVLTAVGEEAVLLCAASGVPPPRVIWYRGGLEVILAPGDSRSGTLRIPEAQERDAGLYTCKAVNELGDASAEIQLVVGNAPRLTDPPQDVTVELGKSVFLTCRATGRPPPIVTWRRGDGQALEPGRGSRTGQRDSGVLVFERVSLEDQAPYVCEARNVFGKAQAEARLVVTGHAPPQIANSASVVRVLEGQPVSLTCVILAGRPLPERRWLKAGSPLPPGNRHAVRADGSLHLDRALQEDAGRYSCVATNVAGSQHRDVELVVQVPPRIHPTSTHHVTNEGVPASLPCIASGVPTPKITWTKETNALTTSGHYSVSRNGTLVIVQPSPQDAGAYVCTATNSVGFSSQEMWLSVNTKPMIKMNGSQAVDVPLRVTVKAGEEVTLDCEAQGSPTPLLTWTKDANPLLPVTNRYELLPSGSLRLAQAQVGDNGLYGCTASNPAGATSRRYVLRVQVPPQVQPGPRVLKVLAGEALDLNCVAEGNPQPQLNWFKDGMALMGEGAQGSVHFAAVKTSDAGLYRCEASNSAGTDTWKLELLVLEPPHWGTDETKSLLERVAGENASLPCPAQGTPKPRITWRRGPSSEPLNGRPDVAVLDEGSLFLSSVSLADSGEYECQATNEVGSASRRAKLVVYVPPSIREEGHITNVSGLAGQPLTLECDINGFPAPEVAWLKDGQLVGDSGGGWDGEEASGHRLLDGSRSLHFPRIQESHSGLYSCQAENQAGSAQRDFNLAVFIPPSLLGAGAAQEVLGLAGADVTLECQTSGVPTPQVEWTKDGQPILPGDPHILLQEDGQVLRIISSHLGDEGQYQCVAFSPAGQQAKDFQLSIHSPPTIWGSNETGEVTVLEGHTAQLLCEARGMPSPAITWYKDGTLLAPSSEVVYSKGGRQLQLVKAQPSDAGLYTCQASNPAGITKKSTSLEVYVPPTIEGADGGPYLVQAVAGRPVALECVARGHPPPTISWQHEGLPVVDSNGTWLEAGGALQLENPGEASGGLYSCVASSPAGEAVLQYSVEMQVPPQLLVAEGMGQVTATVGQSLDLPCQASGSPVPTIQWLQNGRPAEELAGVQLASQGTILHISHVELNHSGLFACQATNEAGTAGAEVEVSVHGKQVSVNLGASFSAHHWWGEPHSPFPATCNPPVCRHWSAYPKPSLVERWRGRGNLRGQPSGTVREPGLTLLSQIEKADLRDEGVYTCSATNLAGESKKDVTLKVLVPPNIEPGPVNKVVLENASVTLECLASGVPPPDVSWFKGRQPISTQRRVIVSADGRVLHIERVQLSDAGSYRCVATNVAGSAGLKYGLRVNVPPRITLPPNLPGPVLLGTPFRLTCNATGTPRPTLIWLKDGNPVSPEGIPGLKVFPGGQVLTVASARASDSGSYSCVAVSAVGEDRRDVILQVHMPPSILGEELNMSVVVNESVTLECQSHAVPPPVLRWQKDGRPLEPHPGIRLSADKALLEVDRAAVWDAGHYTCEAINQAGRSEKHFNLHVWVPPAFPSKEPYTLTVTEGQTARLSCDCQGIPFPKISWRKDGQPLPGEGDSLEQVLAVGRLLYLGQAQSAQEGTYTCECSNAAGTSSQEQSLEVLVPPQVTGLWEPLTTVSVIQDGNTTLACNATGKPLPVVTWQRDGQPVSVEPGLRLQNQNHSLHVERAQASHAGGYSCVAENTAGRAERRFALSVLAPPHLTGDSDSLTNVTATLHGSFTLLCEAAGVPAPTVQWFQEGQPISPREGTYLLAGGWMLKMTQAQEQDRGLYSCLASNEAGEARRNFSVEVLVPPSIENEDLEEVIKVPEGQTAQLECNATGHPPPKVTWFKDGQSLTVEDPYEMSPDGAFLWIPQANLSNAGHYSCIASNAVGEKTKHTQLSVLVVPTILGVPEKNANEEVTVTINNPISLICEALAFPSPNITWMKDGSPFEASKNIQLLPGTHGLQILNAQKEDAGQYTCVVTNELGEATKNYHVEVLIPPSISKDDPLGEVSVKEVKTKVNSSLTLECECWATPPPSISWYKDGRPVTPSHRLSVLGEGRLLQIQPTQVSDSGRYLCVATNVAGEDDQDFNVLIQVPPMFQKMGDVDAGFEPLPHEEEAQGRVTEYREIVENNPAYLYCDTNAIPPPELTWYREGQPLSAADGVSVLQGGRILQLPLVQAEDAGRYSCKAANEVGEDWLHYELLVLTPPVIPGDTQELVEEVTVNASSAVSLECPALGNPAPAVSWFQNGLPVSPSPRLQVLEEGQVLKVATAEVADAASYMCVAENQAGSAEKLFTLKVQVPPQISDWTTSQLTATLNSSVSLPCEVYAHPNPEVTWYKDGQPLSLGQEAFLLPGTHTLRLARAQPADSGTYLCEALNAAGRDQKMVQLNVLVPPSFKQAPGGPQEAIQVRAGDKAILSCETDSLPEPAVTWFKDQQPLALGQRIQGLQGGQTLEILDSQASDKGVYSCKVSNTAGEAIRTFVLAIQVPPTFEKPERETVNQVAGRTLVLACDVSGIPAPTVTWLKDRLPVESSVVHGVVSRGGRLQLSHLQPAQAGTYTCVAENAQAEARKDFVVSVLVPPQIQDSGMAQEHNVLEKQEIRLHCEAEGQPPPDITWLKDGGLLDQHVGPHLRFYLDGSTLVLKGLRTADSGAYTCVAHNPAGEDARLHTVNVLVPPTIKQQAGDTGTLVSRTGELVTMVCPVQGSPPIHVSWLKDGLPLPLSQRTLLHSSGRTLRISQVQLADSGVFTCVAASPAGVADRNFTLLVLVPPILEPVEFQNNVMAAQGSEVVLPCEARGSPLPLVSWMKDGEPLLPQSLEQGPGLKLESVSVGDAGTYSCTAASEAGEARRHFQLTVMDPPHIEESGETSELSLTPGAHLELLCEARGIPPPNITWHKDGQALRRTENDSQAGRVLRVDNAGLYTCLAESPAGEVEKSFRVRVQAPPNVVGPRGPRSVVGLAPGQLILECSVEAEPAPEIEWHRGGVLLQADAHTHFPEQGRFLKLQALSTADGGDYSCTARNRAGSTSVAFRVEIHTAPTIQSGPNTVNVSVNRTTLLPCQTHGVPTPLVSWRKDGIPLHPGSPRLEFLPEGSLRIHPVLAQDAGHYLCLASNSAGSDRKGLDLRVFEPPAIAPGPSNLTLTAYSPASLPCEARGSPKPLVTWWKDGQKLDLRLQQGAYRLLPSNALFLTAPSPQDSAQFECVVSNEVGESRRRYQVTVHVPPTIADDQTHFTVTRMAPVILTCHSTGSPTPAVSWSKAGTQLGARGSGYRILPSGALEIERALPLHAGRYTCTARNSAGVARKHMVLTVQASPVVKPLPSVVQVVASEEVLLPCEASGIPQPMVIWQKEGLSIPEGAHMQVLPSGQLRIMHASPEDAGNYFCIAQNSVGSAMAKTRLVVQVPPVIENGLPDLSTIEGSHALLPCTAKGSPEPAITWEKDGHLVSGAEGKFTLQPSGELLVKNSEGQDAGTYICTAENAVGRARRRVHLTILTLPVLTTLPGDRSLRLGDRLWLRCVARGSPTPRIGWTINDQPVTEGVSEQDGGSTLQRAAVTREDSGTYTCWAENRVGRVQAVSFVHVKEAPVLQGEAFSYLVEPVGGSIQLHCVVRGDPAPDIHWTKDGLPLPISRLHFQLQNGSLTILRTKMDDAGRYQCLAVNEMGTVKKVVTVVLQSAPVFQVEPQDVTVRSGVDVELRCRATGEPVPTIEWLRAGRPLQAGRKLRALPDGSLWLEHVEAGDAGVYECVAHNHLGSVTAKALLAVRGEPRGSRGSMTGVINGQEFGMATLNISVLQQGSSEAPTIWSSISQVPASVGPLMRVLVVTIAPIYWALARESGEALNGYSLTGGSFQQESQMEFSTGELLTMTQVARGLDPDGLLLVDMKINGMIPESLADGDLRVQDFQEHYVQTGPGQLFAGSTQRFLHDSLPASLRCNHSIQYDETRGLQPQLVQHLRASSISSAFDPEAEALNFQLTTALQTEENEVGCPEGFEPDVQGAFCVDKDECSGGPSPCSHTCRNAPGHFSCSCPTGFSLAWDHRNCRDVDECAGNTHLCQEEQRCVNLLGSYNCLASCRPGFRVTADGSNCEDVDECLEQLDECHYNQLCENTPGGHHCGCPRGYRQQGHSLPCLDINECLQLPTPCVYQCQNLQGSYRCLCPPGQTLLRDGRTCIPLERNRQNITIVSHRSPFGPWLRSRVPRPSSSYHTWVSLRPGSGALNSVGRAWCPPGFIRQDGVCADLDECRVRSLCQHACQNTEGSYYCLCPSGYRLLPSGKNCQDINECEEDGIECGPGQMCFNTRGSFQCVDTPCPTTYRQGSSPGTCFRRCSQDCSASGPSTLQYRLLPLPLGVRAHHDVARLAAFSEAGIPANRTELTVLEPDPRSPFALRQLRAGQGAVYTRRALTRAGLYRLTVRAAAPRHQSVYILLIAVSPYPY.

The signal sequence occupies residues 1-19 (MTPGAQLLPLLVAISTAVA). The region spanning 37–211 (DATLAFVFDV…QVSEVLKWVE (175 aa)) is the VWFA domain. 7 N-linked (GlcNAc...) asparagine glycosylation sites follow: N330, N347, N380, N479, N526, N548, and N675. 43 Ig-like C2-type domains span residues 426-515 (PGVP…IVIT), 517-601 (PPPQ…RATT), 609-692 (PQVS…ETVT), 699-782 (PSVS…IQLV), 787-877 (PRLT…LVVT), 882-968 (PQIA…VELV), 973-1058 (PRIH…MWLS), 1063-1156 (PMIK…YVLR), 1161-1239 (PQVQ…WKLE), 1246-1335 (PHWG…AKLV), 1340-1437 (PSIR…FNLA), 1442-1531 (PSLL…FQLS), 1536-1624 (PTIW…TSLE), 1629-1717 (PTIE…YSVE), 1722-1810 (PQLL…VEVS), 1825-1913 (SAHH…KDVT), 1920-2008 (PNIE…LRVN), 2011-2100 (PRIT…VILQ), 2105-2189 (PSIL…KHFN), 2196-2285 (PAFP…QSLE), 2290-2379 (PQVT…FALS), 2384-2473 (PHLT…FSVE), 2478-2566 (PSIE…TQLS), 2571-2662 (PTIL…YHVE), 2667-2758 (PSIS…QDFN), 2781-2871 (PHEE…YELL), 2875-2964 (PPVI…KLFT), 2971-3058 (PQIS…VQLN), 3063-3153 (PSFK…FVLA), 3157-3245 (PPTF…FVVS), 3250-3340 (PQIQ…HTVN), 3345-3432 (PTIK…RNFT), 3438-3523 (PPIL…FQLT), 3528-3609 (PHIE…FRVR), 3614-3702 (PNVV…FRVE), 3707-3793 (PTIQ…LDLR), 3798-3886 (PAIA…YQVT), 3891-3977 (PTIA…MVLT), 3982-4067 (PVVK…TRLV), 4071-4158 (PPVI…VHLT), 4163-4244 (PVLT…QAVS), 4252-4336 (PVLQ…KVVT), and 4343-4428 (PVFQ…ALLA). An intrachain disulfide couples C449 to C497. Cystine bridges form between C539-C588, C630-C678, C720-C766, C808-C859, C903-C952, and C994-C1042. Residues R909, R914, and R915 each carry the omega-N-methylarginine modification. N1024 and N1068 each carry an N-linked (GlcNAc...) asparagine glycan. Cystine bridges form between C1091-C1140 and C1182-C1225. An N-linked (GlcNAc...) asparagine glycan is attached at N1264. Residues 1265–1293 (ASLPCPAQGTPKPRITWRRGPSSEPLNGR) are disordered. A disulfide bond links C1269 and C1319. A glycan (N-linked (GlcNAc...) asparagine) is linked at N1350. 2 disulfide bridges follow: C1363-C1421 and C1465-C1515. N-linked (GlcNAc...) asparagine glycosylation is present at N1542. 4 disulfide bridges follow: C1559–C1608, C1653–C1701, C1745–C1794, and C1846–C1899. N1676 and N1787 each carry an N-linked (GlcNAc...) asparagine glycan. An N-linked (GlcNAc...) asparagine glycan is attached at N1934. Cystine bridges form between C1941/C1990 and C2033/C2084. N-linked (GlcNAc...) asparagine glycosylation is found at N2034, N2113, and N2119. Intrachain disulfides connect C2126–C2175 and C2218–C2269. N-linked (GlcNAc...) asparagine glycans are attached at residues N2309, N2315, N2345, and N2395. C2314 and C2363 are oxidised to a cystine. A disulfide bond links C2408 and C2457. Residues N2469, N2502, N2541, N2606, and N2688 are each glycosylated (N-linked (GlcNAc...) asparagine). 2 disulfide bridges follow: C2501–C2550 and C2597–C2646. Disulfide bonds link C2695–C2744 and C2806–C2855. N2892 carries N-linked (GlcNAc...) asparagine glycosylation. C2901 and C2950 form a disulfide bridge. N-linked (GlcNAc...) asparagine glycosylation is present at N2986. 5 cysteine pairs are disulfide-bonded: C2993/C3042, C3088/C3137, C3180/C3229, C3273/C3324, and C3369/C3418. An N-linked (GlcNAc...) asparagine glycan is attached at N3430. Intrachain disulfides connect C3462-C3507, C3551-C3593, and C3637-C3686. Residues N3560 and N3575 are each glycosylated (N-linked (GlcNAc...) asparagine). 2 N-linked (GlcNAc...) asparagine glycosylation sites follow: N3717 and N3721. C3728 and C3777 form a disulfide bridge. N3806 is a glycosylation site (N-linked (GlcNAc...) asparagine). Cystine bridges form between C3819–C3870, C3912–C3961, C4003–C4051, C4093–C4142, C4184–C4231, C4274–C4322, and C4364–C4412. N-linked (GlcNAc...) asparagine glycosylation is present at N4304. The Nidogen G2 beta-barrel domain occupies 4432–4654 (EPRGSRGSMT…QTEENEVGCP (223 aa)). Residues N4455 and N4601 are each glycosylated (N-linked (GlcNAc...) asparagine). One can recognise an EGF-like 1; calcium-binding domain in the interval 4668 to 4708 (DKDECSGGPSPCSHTCRNAPGHFSCSCPTGFSLAWDHRNCR). Intrachain disulfides connect C4672-C4683, C4679-C4692, C4694-C4707, C4713-C4726, C4720-C4735, C4739-C4752, C4758-C4771, C4765-C4780, C4801-C4812, C4808-C4821, and C4823-C4836. An EGF-like 2; calcium-binding domain is found at 4709–4753 (DVDECAGNTHLCQEEQRCVNLLGSYNCLASCRPGFRVTADGSNCE). An EGF-like 3; calcium-binding domain is found at 4754-4789 (DVDECLEQLDECHYNQLCENTPGGHHCGCPRGYRQQ). An EGF-like 4; calcium-binding domain is found at 4797-4837 (DINECLQLPTPCVYQCQNLQGSYRCLCPPGQTLLRDGRTCI). N-linked (GlcNAc...) asparagine glycosylation occurs at N4845. Residues 4904-4943 (DLDECRVRSLCQHACQNTEGSYYCLCPSGYRLLPSGKNCQ) enclose the EGF-like 5; calcium-binding domain. Cystine bridges form between C4908-C4918, C4914-C4927, and C4929-C4942. N-linked (GlcNAc...) asparagine glycosylation occurs at N5035.

In terms of processing, reported to be phosphorylated; however as this position is extracellular, the in vivo relevance is unsure. In terms of tissue distribution, in neonatal skin, localized in the pericellular space of basal epidermal keratinocytes (at protein level). In adult skin, restricted to basal keratinocytes of hair follicles and the interfollicular epidermis. Absent from the myotendinous junction but present in skeletal muscle (at protein level). Expressed in the pericellular extracellular matrix of epithelial cells in a number of tissues including embryonic trophectoderm and adult skin and tongue. Also present in the extracellular matrix of some, but not all, blood vessels. Expressed primarily in epithelial cells in the embryonic epidermis, lung, intestine, skeletal hindlimb muscle, tongue and the muscular layers of the esophagus.

It localises to the secreted. It is found in the extracellular space. The protein localises to the extracellular matrix. Its subcellular location is the cleavage furrow. The polypeptide is Hemicentin-2 (Hmcn2) (Mus musculus (Mouse)).